Reading from the N-terminus, the 211-residue chain is UPF0056 membrane protein YvbG (211 aa).

6 helical membrane-spanning segments follow: residues Met1–Gly21, Ile47–Phe67, Ile69–Leu89, Ile114–Met134, Met150–Ile170, and Leu188–Val208.

It belongs to the UPF0056 (MarC) family.

It localises to the cell membrane. The sequence is that of UPF0056 membrane protein YvbG (yvbG) from Bacillus subtilis (strain 168).